Here is a 388-residue protein sequence, read N- to C-terminus: Chorismate synthase (388 aa).

The NADP(+) site is built by Arg-39 and Arg-45. Residues Arg-130–Ser-132, Asn-251–Ala-252, Gly-296, Lys-311–Thr-315, and Arg-337 each bind FMN.

Belongs to the chorismate synthase family. In terms of assembly, homotetramer. It depends on FMNH2 as a cofactor.

The catalysed reaction is 5-O-(1-carboxyvinyl)-3-phosphoshikimate = chorismate + phosphate. Its pathway is metabolic intermediate biosynthesis; chorismate biosynthesis; chorismate from D-erythrose 4-phosphate and phosphoenolpyruvate: step 7/7. Catalyzes the anti-1,4-elimination of the C-3 phosphate and the C-6 proR hydrogen from 5-enolpyruvylshikimate-3-phosphate (EPSP) to yield chorismate, which is the branch point compound that serves as the starting substrate for the three terminal pathways of aromatic amino acid biosynthesis. This reaction introduces a second double bond into the aromatic ring system. This is Chorismate synthase from Streptococcus pneumoniae (strain ATCC 700669 / Spain 23F-1).